The sequence spans 239 residues: uncharacterized protein (239 aa).

4 consecutive transmembrane segments (helical) span residues 9-29 (LAIY…SQII), 65-85 (IIYL…YLFI), 94-114 (IILI…TFVV), and 167-187 (IYFA…MHWI).

It localises to the cell membrane. This is an uncharacterized protein from Methanocaldococcus jannaschii (strain ATCC 43067 / DSM 2661 / JAL-1 / JCM 10045 / NBRC 100440) (Methanococcus jannaschii).